The sequence spans 196 residues: Mitochondrial intermembrane space cysteine motif-containing protein MIX23 (196 aa).

The Cx14C motif motif lies at 99–114 (CEKEAAEMKNETDQQC). Residues 178–192 (CEQNNDYLKEFTQFC) carry the Cx13C motif motif.

The protein belongs to the MIX23 family.

The protein resides in the mitochondrion intermembrane space. Its function is as follows. Regulator of the mitochondrial protein import machinery that is localized in the mitochondrial intermembrane space (IMS) and facilitates the transport of proteins from the cytosol into the mitochondrial matrix. Not essential for mitochondrial protein import but induced and required when mitochondrial import is compromised. Stimulates or stabilizes the translocation into the mitochondria of proteins such as OXA1, ATP1 and COX12. This is Mitochondrial intermembrane space cysteine motif-containing protein MIX23 from Saccharomyces cerevisiae (strain ATCC 204508 / S288c) (Baker's yeast).